The chain runs to 339 residues: RNA polymerase principal sigma factor HrdC (339 aa).

The span at M1–A10 shows a compositional bias: low complexity. Disordered stretches follow at residues M1–D37 and R71–E101. A compositionally biased stretch (basic and acidic residues) spans T91 to E101. The Polymerase core binding signature appears at D130–V143. The H-T-H motif DNA-binding region spans L300 to K319.

This sequence belongs to the sigma-70 factor family. As to quaternary structure, interacts transiently with the RNA polymerase catalytic core.

In terms of biological role, sigma factors are initiation factors that promote the attachment of RNA polymerase to specific initiation sites and are then released. The polypeptide is RNA polymerase principal sigma factor HrdC (hrdC) (Streptomyces coelicolor (strain ATCC BAA-471 / A3(2) / M145)).